We begin with the raw amino-acid sequence, 292 residues long: Cytidine deaminase (292 aa).

CMP/dCMP-type deaminase domains lie at 47–167 (TPLK…FGPK) and 186–292 (DHQD…YYSL). 88–90 (NQE) contacts substrate. His101 lines the Zn(2+) pocket. Catalysis depends on Glu103, which acts as the Proton donor. Zn(2+) is bound by residues Cys128 and Cys131.

Belongs to the cytidine and deoxycytidylate deaminase family. As to quaternary structure, homodimer. Zn(2+) serves as cofactor.

The catalysed reaction is cytidine + H2O + H(+) = uridine + NH4(+). The enzyme catalyses 2'-deoxycytidine + H2O + H(+) = 2'-deoxyuridine + NH4(+). This enzyme scavenges exogenous and endogenous cytidine and 2'-deoxycytidine for UMP synthesis. The chain is Cytidine deaminase from Haemophilus influenzae (strain PittEE).